The following is a 622-amino-acid chain: MALLQISEPGMAPAPHQRRLAVGIDLGTTNSLVAAVRNSVPEVLPDEAGRALLPSVVRYLEKGGRRIGHEAKEQAATDPRNTIVSVKRFMGRGKAEVEGAANAPYEFVDAPGMVQIRTIDGVKSPVEVSAEILATLRYRAEDTLGDELVGAVITVPAYFDDAQRQATKDAARLAGLNVLRLLNEPTAAAIAYGLDNAAEGLYAVYDLGGGTFDLSILKLTKGVFEVLAAGGDSALGGDDFDHVLFGHVLAQAGIDAKALAPEDVRLLLDRVRVLKEALSSAPQASLDVTLSNGARLVQTISHDTFASLVEPLVQRTLTPTRKALRDAQVTPADIKGVVLVGGATRMPVIRDAVAKYFGQPPLVNLDPDQVVALGAAIQADLLAGNRGSGDDWLLLDVIPLSLGVETMGGLVEKIIPRNSTIPIARAQEFTTFKDGQTAMAIHVVQGERELVADCRSLARFELRGIPPMTAGAARIRVTYQVDADGLLSVFAREQHSGVEASVVVKPSYGLADDDIAKMLEDSFKTAEIDMRARALREAQVEAQRMIEATQAALSADGELLDDAERTQVDALVAALRTIAQGDDADAIETATKALADGTDEFAARRMDKSIKRALSGRRLDEI.

It belongs to the heat shock protein 70 family.

Functionally, chaperone involved in the maturation of iron-sulfur cluster-containing proteins. Has a low intrinsic ATPase activity which is markedly stimulated by HscB. This chain is Chaperone protein HscA homolog, found in Burkholderia ambifaria (strain MC40-6).